Reading from the N-terminus, the 341-residue chain is Ribulose-5-phosphate reductase 1 (341 aa).

Zn(2+)-binding residues include C38, H64, E65, and E144.

This sequence belongs to the zinc-containing alcohol dehydrogenase family. Heterodimer together with TarI. Can also form a dimer of heterodimers. Requires Zn(2+) as cofactor.

It catalyses the reaction D-ribitol 5-phosphate + NADP(+) = D-ribulose 5-phosphate + NADPH + H(+). The protein operates within cell wall biogenesis; poly(ribitol phosphate) teichoic acid biosynthesis. Catalyzes the NADPH dependent reduction of D-ribulose 5-phosphate to D-ribitol 5-phosphate. This chain is Ribulose-5-phosphate reductase 1, found in Staphylococcus aureus (strain NCTC 8325 / PS 47).